The primary structure comprises 423 residues: MARKKIREYDSKRLLKEHLKRLAGIDLQILSAQVTQSTDFTELVNQQPWLSTMKLVVKPDMLFGKRGKSGLVALNLDIAQVKEFVKERLGVEVEMGGCKAPITTFIVEPFVPHDQEYYLSIVSERLGSTISFSECGGIEIEENWDKVKTIFLPTEKPMTPDACAPLIATLPLEARGKIGDFIKGVFAVFQDLDFSFLEMNPFTIVNGEPYPLDMRGELDDTAAFKNFKKWGNIEFPLPFGRVLSSTEGFIHDLDEKTSASLKFTVLNPKGRIWTMVAGGGASVIYADTVGDLGYASELGNYAEYSGAPNEEEVLQYARVVLDCATADPDGRKRALLIGGGIANFTDVGATFSGIIRALREKESKLKAARMHIYVRRGGPNYQTGLAKMRKLGAELGVPIEVYGPEATMTGICKQAIECVMAAA.

Positions 343, 345, and 376 each coordinate citrate.

Belongs to the succinate/malate CoA ligase beta subunit family. Heterooctamer of 4 alpha and 4 beta chains.

Its subcellular location is the cytoplasm. It localises to the cytosol. It catalyses the reaction oxaloacetate + acetyl-CoA + ADP + phosphate = citrate + ATP + CoA. Its function is as follows. ATP citrate-lyase is the primary enzyme responsible for the synthesis of cytosolic acetyl-CoA, used for the elongation of fatty acids and biosynthesis of isoprenoids, flavonoids and malonated derivatives. May supply substrate to the cytosolic acetyl-CoA carboxylase, which generates the malonyl-CoA used for the synthesis of a multitude of compounds, including very long chain fatty acids and flavonoids. In contrast to all known animal ACL enzymes having a homomeric structure, plant ACLs are composed of alpha and beta chains. This Oryza sativa subsp. japonica (Rice) protein is ATP-citrate synthase alpha chain protein 2 (ACLA-2).